The sequence spans 281 residues: 2-dehydro-3-deoxyphosphooctonate aldolase (281 aa).

Belongs to the KdsA family.

The protein resides in the cytoplasm. The enzyme catalyses D-arabinose 5-phosphate + phosphoenolpyruvate + H2O = 3-deoxy-alpha-D-manno-2-octulosonate-8-phosphate + phosphate. Its pathway is carbohydrate biosynthesis; 3-deoxy-D-manno-octulosonate biosynthesis; 3-deoxy-D-manno-octulosonate from D-ribulose 5-phosphate: step 2/3. It participates in bacterial outer membrane biogenesis; lipopolysaccharide biosynthesis. The protein is 2-dehydro-3-deoxyphosphooctonate aldolase of Psychromonas ingrahamii (strain DSM 17664 / CCUG 51855 / 37).